The primary structure comprises 474 residues: PRAME family member 13 (474 aa).

One copy of the LRR 1; degenerate repeat lies at 97 to 124 (RRKLQVLDLRDVDENFWARWPGAWALSC). Residues 179–203 (HLCCSKLVNYLTPIKHLRKSLKIIY) form an LRR 2; degenerate repeat. The LRR 3; degenerate repeat unit spans residues 204 to 230 (LNSIQELEIHNMSWPRLIRKLRCYLKE). One copy of the LRR 4; degenerate repeat lies at 231–265 (MKTLGKLVFSRCHHSTSDNELEGRLVTKFSSVFLG). 5 LRR repeats span residues 266-291 (LEHL…IRCL), 292-323 (QNPL…GYLK), 324-342 (HLNL…PLGA), 348-375 (AASL…GLSR), and 376-400 (CSQL…LLRH).

Belongs to the PRAME family.

This chain is PRAME family member 13, found in Homo sapiens (Human).